Here is a 147-residue protein sequence, read N- to C-terminus: MTNSKKSSNNSLKNHELYAIAETSGQQFWFEVNRYYDIDRLKAKEKDKITLDKVLLLKDKDSITVGKPYVKDAKIELEVVSHKRDKKILVYKMRPKKKTRRKMGHRQELTRVMVKSIKVGKPTPKSSSKKEETVKKETKPKSEKSTN.

A disordered region spans residues 115 to 147 (KSIKVGKPTPKSSSKKEETVKKETKPKSEKSTN). Over residues 128–147 (SKKEETVKKETKPKSEKSTN) the composition is skewed to basic and acidic residues.

The protein belongs to the bacterial ribosomal protein bL21 family. In terms of assembly, part of the 50S ribosomal subunit. Contacts protein L20.

This protein binds to 23S rRNA in the presence of protein L20. The polypeptide is Large ribosomal subunit protein bL21 (Prochlorococcus marinus (strain MIT 9215)).